Reading from the N-terminus, the 610-residue chain is MCGIISAISKKNVTNILIEGMKRLEYRGYDSSGLAIINKKKEIIRLRSQGKIKNIINLIHKTKQLIGNIGIAHTRWATHGLALKKNAHPHVSKNIAIVHNGIIENYLNIKTKLQKNGYIFTSDTDTEVIAHLIHYEQNKNNKSLLKTIQTVILKLTGSYSMVIMDRYHPNILIAIRSGSPLLIGLGKQENFISSDQLSLLKITKKFIYLNEGDIAILSHKKITIFNKNSILVHRPIVISNIQNDSITKGHYQHYMKKEIYEQPYAIKNAIRNRITKNEKIQFSELNNNAHALLLKIEHIDIIACGTSYNAGMVSKYWFESLSKISCNVEIASEFCHRKFIVKKNSLLLILSQSGETADSLTALRNSKKHEYLGSLVICNSSSSSLVYESNFSILTNAGIEIGVASTKSFTTQLTILLMIAAKINNLKTNDEKIENKVAKTLRLLPEITKNVLKCDSLIYSLAKELSDKNNIIFIGRGHNYPIAMEGALKLKEISYTHAEAYAAGELKHGPLALVDSSTQIIVIAPNDNLIDKIKLNISEIRTRGGVLHIFSDNLTKFNDNTNVIRLPYDGILLSPIIYVIPLQLLAYYVALIKGKNIDKPRNLAKSVTVE.

The Nucleophile; for GATase activity role is filled by Cys-2. Positions Cys-2–Lys-220 constitute a Glutamine amidotransferase type-2 domain. SIS domains follow at residues Ala-289–Asn-429 and Leu-461–Pro-600. Lys-605 acts as the For Fru-6P isomerization activity in catalysis.

Homodimer.

The protein resides in the cytoplasm. The catalysed reaction is D-fructose 6-phosphate + L-glutamine = D-glucosamine 6-phosphate + L-glutamate. In terms of biological role, catalyzes the first step in hexosamine metabolism, converting fructose-6P into glucosamine-6P using glutamine as a nitrogen source. This Buchnera aphidicola subsp. Baizongia pistaciae (strain Bp) protein is Glutamine--fructose-6-phosphate aminotransferase [isomerizing].